The chain runs to 433 residues: Histidinol dehydrogenase (433 aa).

Residues Tyr-130, Gln-191, and Asn-214 each coordinate NAD(+). Substrate contacts are provided by Ser-237, Gln-259, and His-262. The Zn(2+) site is built by Gln-259 and His-262. Catalysis depends on proton acceptor residues Glu-327 and His-328. Residues His-328, Asp-361, Glu-415, and His-420 each coordinate substrate. Asp-361 is a Zn(2+) binding site. His-420 contributes to the Zn(2+) binding site.

This sequence belongs to the histidinol dehydrogenase family. Requires Zn(2+) as cofactor.

It carries out the reaction L-histidinol + 2 NAD(+) + H2O = L-histidine + 2 NADH + 3 H(+). It functions in the pathway amino-acid biosynthesis; L-histidine biosynthesis; L-histidine from 5-phospho-alpha-D-ribose 1-diphosphate: step 9/9. In terms of biological role, catalyzes the sequential NAD-dependent oxidations of L-histidinol to L-histidinaldehyde and then to L-histidine. This is Histidinol dehydrogenase from Ruegeria pomeroyi (strain ATCC 700808 / DSM 15171 / DSS-3) (Silicibacter pomeroyi).